The chain runs to 417 residues: Carboxypeptidase B (417 aa).

The signal sequence occupies residues 1–16 (MLAFLILVTVTLASAH). A propeptide spans 17–110 (HSGEHFEGDK…LEAQFDSRVR (94 aa)) (activation peptide). The region spanning 118–412 (KYNNWETIEA…LAIKYVTSYV (295 aa)) is the Peptidase M14 domain. Cys-173 and Cys-186 are oxidised to a cystine. Residues His-176 and Glu-179 each contribute to the Zn(2+) site. Substrate contacts are provided by residues 176–179 (HARE), Arg-234, and 251–252 (NR). 2 disulfide bridges follow: Cys-245–Cys-268 and Cys-259–Cys-273. His-304 serves as a coordination point for Zn(2+). Substrate-binding positions include 305-306 (SY) and Tyr-356. Glu-378 acts as the Proton donor/acceptor in catalysis.

It belongs to the peptidase M14 family. Zn(2+) serves as cofactor.

The protein localises to the secreted. It localises to the zymogen granule lumen. It catalyses the reaction Preferential release of a C-terminal lysine or arginine amino acid.. The chain is Carboxypeptidase B (CPB1) from Bos taurus (Bovine).